A 150-amino-acid chain; its full sequence is Transcriptional repressor NrdR (150 aa).

The tract at residues 1–22 (MKCPYCSAPDSRVVNSRPSDDG) is disordered. A zinc finger lies at 3-34 (CPYCSAPDSRVVNSRPSDDGASIRRRRECLRC). In terms of domain architecture, ATP-cone spans 49 to 136 (LMVLKRGGQR…VYRDFDSLER (88 aa)).

Belongs to the NrdR family. Requires Zn(2+) as cofactor.

In terms of biological role, negatively regulates transcription of bacterial ribonucleotide reductase nrd genes and operons by binding to NrdR-boxes. The protein is Transcriptional repressor NrdR of Deinococcus geothermalis (strain DSM 11300 / CIP 105573 / AG-3a).